We begin with the raw amino-acid sequence, 315 residues long: MTDSANNRPPRLPRREVHGVLLLDKPLGLSSNDALVRAKRLLRALKAGHTGTLDPLATGLLPLCFGEATKFSQDLLDADKTYEAVVRLGQKTTTGDAEGEVVVERPVSCDRAGLDAAIARFLGEIDQVPPMHSALKKDGRPLYEYARAGQTVERPARRVTIHAIDVLDCALPLAPSFTMRVKCSKGTYIRTLAEDIGEALGCGAHLTGLRRIAVGDLTLDGAVTLDQIDAQADEARPAMLAPVDALLRRCPPVTLSAEAMSRFLQGQRLAYRDLDPDSAPQEGVLARVYGGEPPKLLGVARMREGALRPERLVRL.

D54 functions as the Nucleophile in the catalytic mechanism.

Belongs to the pseudouridine synthase TruB family. Type 1 subfamily.

It carries out the reaction uridine(55) in tRNA = pseudouridine(55) in tRNA. Functionally, responsible for synthesis of pseudouridine from uracil-55 in the psi GC loop of transfer RNAs. This Cupriavidus pinatubonensis (strain JMP 134 / LMG 1197) (Cupriavidus necator (strain JMP 134)) protein is tRNA pseudouridine synthase B.